We begin with the raw amino-acid sequence, 388 residues long: Succinate--CoA ligase [ADP-forming] subunit beta (388 aa).

Residues 9-244 (KSLFAEYGLP…PSQDDAREAH (236 aa)) enclose the ATP-grasp domain. ATP is bound by residues lysine 46, 53-55 (GRG), glutamate 99, threonine 102, and glutamate 107. Positions 199 and 213 each coordinate Mg(2+). Residues asparagine 264 and 321 to 323 (GIV) contribute to the substrate site.

This sequence belongs to the succinate/malate CoA ligase beta subunit family. Heterotetramer of two alpha and two beta subunits. Requires Mg(2+) as cofactor.

The enzyme catalyses succinate + ATP + CoA = succinyl-CoA + ADP + phosphate. The catalysed reaction is GTP + succinate + CoA = succinyl-CoA + GDP + phosphate. Its pathway is carbohydrate metabolism; tricarboxylic acid cycle; succinate from succinyl-CoA (ligase route): step 1/1. In terms of biological role, succinyl-CoA synthetase functions in the citric acid cycle (TCA), coupling the hydrolysis of succinyl-CoA to the synthesis of either ATP or GTP and thus represents the only step of substrate-level phosphorylation in the TCA. The beta subunit provides nucleotide specificity of the enzyme and binds the substrate succinate, while the binding sites for coenzyme A and phosphate are found in the alpha subunit. The protein is Succinate--CoA ligase [ADP-forming] subunit beta of Shewanella baltica (strain OS195).